The following is a 602-amino-acid chain: Isocitrate dehydrogenase kinase/phosphatase (602 aa).

ATP contacts are provided by residues 325–331 and lysine 346; that span reads APGIKGM. Aspartate 381 is an active-site residue.

The protein belongs to the AceK family.

The protein resides in the cytoplasm. It carries out the reaction L-seryl-[isocitrate dehydrogenase] + ATP = O-phospho-L-seryl-[isocitrate dehydrogenase] + ADP + H(+). Functionally, bifunctional enzyme which can phosphorylate or dephosphorylate isocitrate dehydrogenase (IDH) on a specific serine residue. This is a regulatory mechanism which enables bacteria to bypass the Krebs cycle via the glyoxylate shunt in response to the source of carbon. When bacteria are grown on glucose, IDH is fully active and unphosphorylated, but when grown on acetate or ethanol, the activity of IDH declines drastically concomitant with its phosphorylation. This Paracidovorax citrulli (strain AAC00-1) (Acidovorax citrulli) protein is Isocitrate dehydrogenase kinase/phosphatase.